The sequence spans 298 residues: 4-nitrophenylphosphatase (298 aa).

As to quaternary structure, homodimer. In terms of processing, the N-terminus is blocked.

The enzyme catalyses 4-nitrophenyl phosphate + H2O = 4-nitrophenol + phosphate + H(+). With respect to regulation, activity enhanced by Mg(2+) ion but inhibited by Zn(2+) ion. In Schizosaccharomyces pombe (strain 972 / ATCC 24843) (Fission yeast), this protein is 4-nitrophenylphosphatase (pho2).